We begin with the raw amino-acid sequence, 751 residues long: Glutathione biosynthesis bifunctional protein GshAB (751 aa).

Residues 1-336 (MELDAVGKAI…QADQLTRQVL (336 aa)) form a glutamate--cysteine ligase region.

It in the N-terminal section; belongs to the glutamate--cysteine ligase type 1 family. Type 2 subfamily. Monomer.

It catalyses the reaction L-cysteine + L-glutamate + ATP = gamma-L-glutamyl-L-cysteine + ADP + phosphate + H(+). It carries out the reaction gamma-L-glutamyl-L-cysteine + glycine + ATP = glutathione + ADP + phosphate + H(+). It participates in sulfur metabolism; glutathione biosynthesis; glutathione from L-cysteine and L-glutamate: step 1/2. Its pathway is sulfur metabolism; glutathione biosynthesis; glutathione from L-cysteine and L-glutamate: step 2/2. Functionally, synthesizes glutathione from L-glutamate and L-cysteine via gamma-L-glutamyl-L-cysteine. The chain is Glutathione biosynthesis bifunctional protein GshAB (gshAB) from Lactiplantibacillus plantarum (strain ATCC BAA-793 / NCIMB 8826 / WCFS1) (Lactobacillus plantarum).